Reading from the N-terminus, the 344-residue chain is Deoxyhypusine hydroxylase (344 aa).

HEAT-like PBS-type repeat units follow at residues 81 to 107 and 115 to 140; these read LKHE…VLED and RHEA…FRDR. Fe cation is bound by residues His-83, Glu-84, His-116, and Glu-117. A disordered region spans residues 169-188; the sequence is EKLRASDFSSVDPAPPTAQG. HEAT-like PBS-type repeat units follow at residues 210–240, 248–274, and 281–308; these read KRYR…LAKG, FRHE…ALSN, and VRHE…FLHD. Residues His-250, Glu-251, His-283, and Glu-284 each contribute to the Fe cation site.

Belongs to the deoxyhypusine hydroxylase family. It depends on Fe(2+) as a cofactor.

The protein resides in the cytoplasm. The protein localises to the nucleus. It catalyses the reaction [eIF5A protein]-deoxyhypusine + AH2 + O2 = [eIF5A protein]-hypusine + A + H2O. Its pathway is protein modification; eIF5A hypusination. Its function is as follows. Catalyzes the hydroxylation of the N(6)-(4-aminobutyl)-L-lysine intermediate to form hypusine, an essential post-translational modification only found in mature eIF-5A factor. This Chaetomium globosum (strain ATCC 6205 / CBS 148.51 / DSM 1962 / NBRC 6347 / NRRL 1970) (Soil fungus) protein is Deoxyhypusine hydroxylase.